The primary structure comprises 155 residues: Small ribosomal subunit protein uS7 (155 aa).

Belongs to the universal ribosomal protein uS7 family. Part of the 30S ribosomal subunit. Contacts proteins S9 and S11.

Its function is as follows. One of the primary rRNA binding proteins, it binds directly to 16S rRNA where it nucleates assembly of the head domain of the 30S subunit. Is located at the subunit interface close to the decoding center, probably blocks exit of the E-site tRNA. In Mesoplasma florum (strain ATCC 33453 / NBRC 100688 / NCTC 11704 / L1) (Acholeplasma florum), this protein is Small ribosomal subunit protein uS7.